A 423-amino-acid chain; its full sequence is Adenosylmethionine-8-amino-7-oxononanoate aminotransferase (423 aa).

Position 51 (Trp-51) interacts with substrate. 111 to 112 is a binding site for pyridoxal 5'-phosphate; that stretch reads GS. Substrate is bound at residue Tyr-144. Asp-243 contributes to the pyridoxal 5'-phosphate binding site. Residues Lys-272 and Gly-306 each coordinate substrate. The residue at position 272 (Lys-272) is an N6-(pyridoxal phosphate)lysine. Position 307–308 (307–308) interacts with pyridoxal 5'-phosphate; sequence PT. Arg-390 is a substrate binding site.

The protein belongs to the class-III pyridoxal-phosphate-dependent aminotransferase family. BioA subfamily. As to quaternary structure, homodimer. The cofactor is pyridoxal 5'-phosphate.

It is found in the cytoplasm. It carries out the reaction (8S)-8-amino-7-oxononanoate + S-adenosyl-L-methionine = S-adenosyl-4-methylsulfanyl-2-oxobutanoate + (7R,8S)-7,8-diammoniononanoate. It participates in cofactor biosynthesis; biotin biosynthesis; 7,8-diaminononanoate from 8-amino-7-oxononanoate (SAM route): step 1/1. In terms of biological role, catalyzes the transfer of the alpha-amino group from S-adenosyl-L-methionine (SAM) to 7-keto-8-aminopelargonic acid (KAPA) to form 7,8-diaminopelargonic acid (DAPA). It is the only aminotransferase known to utilize SAM as an amino donor. The chain is Adenosylmethionine-8-amino-7-oxononanoate aminotransferase from Corynebacterium glutamicum (strain ATCC 13032 / DSM 20300 / JCM 1318 / BCRC 11384 / CCUG 27702 / LMG 3730 / NBRC 12168 / NCIMB 10025 / NRRL B-2784 / 534).